The primary structure comprises 807 residues: Serine/threonine-protein kinase AfsK (807 aa).

The Protein kinase domain maps to 16–272 (FEVLGRLGAG…QAQLAPHLFA (257 aa)). Residues 22-30 (LGAGGMGLV) and K44 each bind ATP. The residue at position 71 (S71) is a Phosphoserine; by autocatalysis. D138 serves as the catalytic Proton acceptor. T168 carries the post-translational modification Phosphothreonine; by autocatalysis. 2 disordered regions span residues 292-328 (MIER…HRLA) and 353-429 (AGPS…PSPA). The segment covering 297-315 (RGGRRTARRPPRPRPRRLR) has biased composition (basic residues). Residues 353-363 (AGPSAAPDGGP) are compositionally biased toward low complexity.

Belongs to the protein kinase superfamily. Ser/Thr protein kinase family. As to quaternary structure, interacts (via the N-terminal kinase domain) with KbpA; the interaction prevents autophosphorylation of AfsK. In terms of processing, autophosphorylated mainly on threonine residues. Some phosphorylation on serine residues. Autophosphorylation on Thr-168 is the major site enhancing kinase activity towards AfsR, and is regulated though interaction with KbpA.

The enzyme catalyses L-seryl-[protein] + ATP = O-phospho-L-seryl-[protein] + ADP + H(+). It catalyses the reaction L-threonyl-[protein] + ATP = O-phospho-L-threonyl-[protein] + ADP + H(+). In terms of biological role, component of the AfsK/AfsR system involved in the response of aerial mycelium formation to glucose. The sequence is that of Serine/threonine-protein kinase AfsK (afsK) from Streptomyces griseus.